Consider the following 60-residue polypeptide: Potassium channel toxin Tst-beta-KTx (60 aa).

The BetaSPN-type CS-alpha/beta domain maps to 26–60; it reads QFGCPAYEGYCNDHCNDIERKDGECHGFKCKCAKD. 3 cysteine pairs are disulfide-bonded: cysteine 29–cysteine 50, cysteine 36–cysteine 55, and cysteine 40–cysteine 57.

Belongs to the long chain scorpion toxin family. Class 1 subfamily. In terms of tissue distribution, expressed by the venom gland.

The protein resides in the secreted. Its function is as follows. Inhibits voltage-gated potassium channels Kv1.1/KCNA1, Kv1.2/KCNA2, and Kv1.3/KCNA3. Does not induce hemolytic activity, lactate dehydrogenase (LDH) release from mast cells, mast cell degranulation, and antimicrobial effects. In vivo, injection into mice causes moderate edema formation, but induces very weak or no change in nociceptive sensibility. It also reduces mice locomotion, suggesting an increase in anxiety, but causes no alteration in rearing (standing on hind limbs). This is Potassium channel toxin Tst-beta-KTx from Tityus stigmurus (Brazilian scorpion).